We begin with the raw amino-acid sequence, 674 residues long: Dymeclin (674 aa).

Residue Gly-2 is the site of N-myristoyl glycine attachment.

It belongs to the dymeclin family. As to quaternary structure, interacts with GOLM1 and PPIB. In terms of processing, myristoylated in vitro; myristoylation is not essential for protein targeting to Golgi compartment.

It localises to the cytoplasm. It is found in the golgi apparatus. The protein resides in the membrane. Its function is as follows. Necessary for correct organization of Golgi apparatus. Involved in bone development. The polypeptide is Dymeclin (Dym) (Rattus norvegicus (Rat)).